A 281-amino-acid chain; its full sequence is Nuclear transcription factor Y subunit nfya-2 (281 aa).

Disordered stretches follow at residues Met-1–Gln-27 and Arg-163–Glu-261. The short motif at Met-150–Gly-173 is the Subunit association domain (SAD) element. Residues Arg-166–Arg-188 show a composition bias toward basic and acidic residues. The NFYA/HAP2-type DNA-binding region spans Gln-180–Asn-204. Residues Gln-189–Gly-198 show a composition bias toward basic residues. A compositionally biased stretch (low complexity) spans Asn-204–Ala-220.

It belongs to the NFYA/HAP2 subunit family. In terms of assembly, forms a heterotrimeric transcription factor complex (nfya-2-NF-Y complex) composed of nfya-2, nfyb-1 and nfyc-1. Interacts with the nfyb-1 and nfyc-1 dimer; the interaction is required for subsequent binding to the 5'-CCAAT-3' box motif in DNA. Does not interact with either nfyb-1 or nfyc-1 in their monomeric form. Highly expressed in certain parts of the gonads. Expressed in the spermatheca, intestine and in some neurons in the head. Not expressed in the intestine, the hypodermis, body wall muscle surrounding the pseudocoelomic space, secretory cells in the pharyngeal terminal bulb wall, in the small ganglia surrounding the pharynx and in the neurons running anteriorly to the sensory organs in the head.

Its subcellular location is the nucleus. In terms of biological role, component of the sequence-specific heterotrimeric transcription factor (nfya-2-NF-Y) which specifically recognizes a 5'-CCAAT-3' box motif found in the promoters of its target genes to regulate their expression and control cellular identity in particular tissue types. In association with the components in the nfya-2-NF-Y complex, may repress the expression of the T-box transcription factor tbx-2 throughout larval development, which most likely restricts its expression to certain tissues. This Caenorhabditis elegans protein is Nuclear transcription factor Y subunit nfya-2.